The sequence spans 83 residues: Small cysteine-rich protein 3 (83 aa).

Residues 1–21 form the signal peptide; that stretch reads MGVKLNICLLLLLVAIISSQG. The propeptide occupies 22 to 39; the sequence is FNLRKKEDSKDEKPFGNY. Over residues 25–35 the composition is skewed to basic and acidic residues; the sequence is RKKEDSKDEKP. Residues 25–44 are disordered; sequence RKKEDSKDEKPFGNYRRGSP.

It belongs to the Cnidaria small cysteine-rich protein (SCRiP) family. alpha subfamily. Contains 4 disulfide bonds.

The protein resides in the secreted. Its subcellular location is the nematocyst. In terms of biological role, this recombinant protein induces severe neurotoxicity on zebrafish larvae (Danio rerio) at a concentration of 230 mg/ml, but does not show toxicity when injected in blowfly larvae (Sarcophaga falculata). All fish incubated with this protein died within 16 hours of exposure. Has also been claimed to be implied in calcification, but this function seems improbable. This is Small cysteine-rich protein 3 from Acropora millepora (Staghorn coral).